The sequence spans 608 residues: Auxin response factor 3 (608 aa).

The tract at residues Met1–Ser40 is disordered. The segment covering Gln18–Ser40 has biased composition (low complexity). The segment at residues Phe159–Ser261 is a DNA-binding region (TF-B3).

Belongs to the ARF family. As to quaternary structure, homo and heterodimers. In terms of tissue distribution, expressed in the whole plant.

The protein resides in the nucleus. Auxin response factors (ARFs) are transcriptional factors that bind specifically to the DNA sequence 5'-TGTCTC-3' found in the auxin-responsive promoter elements (AuxREs). Could act as transcriptional activator or repressor. Formation of heterodimers with Aux/IAA proteins may alter their ability to modulate early auxin response genes expression. Involved in the establishment or elaboration of tissue patterning during gynoecial development. The sequence is that of Auxin response factor 3 (ARF3) from Arabidopsis thaliana (Mouse-ear cress).